Consider the following 260-residue polypeptide: Exosome complex component Rrp4 (260 aa).

The region spanning 59 to 128 (NDVVIGIVIV…SSMKVELALR (70 aa)) is the S1 motif domain. The 59-residue stretch at 136 to 194 (KTGQIIKVESVKVPRVIGHGGSMISMLKKETNCSIFVGQNGRIWIDGKDEDIELLSKAL) folds into the KH domain.

The protein belongs to the RRP4 family. Component of the archaeal exosome complex. Forms a trimer of Rrp4 and/or Csl4 subunits. The trimer associates with a hexameric ring-like arrangement composed of 3 Rrp41-Rrp42 heterodimers.

The protein resides in the cytoplasm. Functionally, non-catalytic component of the exosome, which is a complex involved in RNA degradation. Increases the RNA binding and the efficiency of RNA degradation. Confers strong poly(A) specificity to the exosome. In Methanosarcina acetivorans (strain ATCC 35395 / DSM 2834 / JCM 12185 / C2A), this protein is Exosome complex component Rrp4.